The sequence spans 295 residues: Pyridoxal 5'-phosphate synthase subunit PdxS (295 aa).

Position 25 (aspartate 25) interacts with D-ribose 5-phosphate. Lysine 82 functions as the Schiff-base intermediate with D-ribose 5-phosphate in the catalytic mechanism. A D-ribose 5-phosphate-binding site is contributed by glycine 154. Position 166 (arginine 166) interacts with D-glyceraldehyde 3-phosphate. D-ribose 5-phosphate is bound by residues glycine 215 and 236 to 237 (GS).

The protein belongs to the PdxS/SNZ family. As to quaternary structure, in the presence of PdxT, forms a dodecamer of heterodimers.

It carries out the reaction aldehydo-D-ribose 5-phosphate + D-glyceraldehyde 3-phosphate + L-glutamine = pyridoxal 5'-phosphate + L-glutamate + phosphate + 3 H2O + H(+). The protein operates within cofactor biosynthesis; pyridoxal 5'-phosphate biosynthesis. In terms of biological role, catalyzes the formation of pyridoxal 5'-phosphate from ribose 5-phosphate (RBP), glyceraldehyde 3-phosphate (G3P) and ammonia. The ammonia is provided by the PdxT subunit. Can also use ribulose 5-phosphate and dihydroxyacetone phosphate as substrates, resulting from enzyme-catalyzed isomerization of RBP and G3P, respectively. The protein is Pyridoxal 5'-phosphate synthase subunit PdxS of Staphylococcus haemolyticus (strain JCSC1435).